The sequence spans 167 residues: NADPH-dependent 7-cyano-7-deazaguanine reductase (167 aa).

A disordered region spans residues 1-24; sequence MTTRSQDQTRDLKVLGTGRLTSPE. C57 (thioimide intermediate) is an active-site residue. D64 serves as the catalytic Proton donor. Substrate-binding positions include 79-81 and 98-99; these read VES and ME.

Belongs to the GTP cyclohydrolase I family. QueF type 1 subfamily.

The protein resides in the cytoplasm. The catalysed reaction is 7-aminomethyl-7-carbaguanine + 2 NADP(+) = 7-cyano-7-deazaguanine + 2 NADPH + 3 H(+). Its pathway is tRNA modification; tRNA-queuosine biosynthesis. Its function is as follows. Catalyzes the NADPH-dependent reduction of 7-cyano-7-deazaguanine (preQ0) to 7-aminomethyl-7-deazaguanine (preQ1). The chain is NADPH-dependent 7-cyano-7-deazaguanine reductase from Desulfovibrio desulfuricans (strain ATCC 27774 / DSM 6949 / MB).